The chain runs to 370 residues: GTPase Obg (370 aa).

One can recognise an Obg domain in the interval 1 to 159 (MKFIDEARIE…RMLRLELKVL (159 aa)). Positions 160-334 (ADVGLLGMPN…LCYAIYDYLA (175 aa)) constitute an OBG-type G domain. Residues 166-173 (GMPNAGKS), 191-195 (FTTLA), 213-216 (DIPG), 284-287 (NKLD), and 315-317 (SAL) each bind GTP. Mg(2+)-binding residues include S173 and T193. Residues 344–370 (EEEDLATDVRFRDAPPADGGATPGGDA) are disordered.

Belongs to the TRAFAC class OBG-HflX-like GTPase superfamily. OBG GTPase family. Monomer. The cofactor is Mg(2+).

The protein localises to the cytoplasm. Its function is as follows. An essential GTPase which binds GTP, GDP and possibly (p)ppGpp with moderate affinity, with high nucleotide exchange rates and a fairly low GTP hydrolysis rate. Plays a role in control of the cell cycle, stress response, ribosome biogenesis and in those bacteria that undergo differentiation, in morphogenesis control. In Burkholderia ambifaria (strain MC40-6), this protein is GTPase Obg.